A 288-amino-acid polypeptide reads, in one-letter code: uncharacterized protein (288 aa).

The span at 126–136 (VAAPASTPVAP) shows a compositional bias: low complexity. 2 disordered regions span residues 126 to 227 (VAAP…VTSV) and 258 to 288 (KEKDQTAEESQEQPSLSLEETLVHDRISSEE). Positions 143-152 (RKEFKNEKWK) are enriched in basic and acidic residues. Residues 153–162 (DKKKQGRRRN) show a composition bias toward basic residues. The segment covering 180-194 (VAEECLQESSSEEGD) has biased composition (acidic residues). Basic and acidic residues predominate over residues 278-288 (TLVHDRISSEE).

It belongs to the chlamydial CPn_0623/CT_504/TC_0791 family.

This is an uncharacterized protein from Chlamydia trachomatis serovar D (strain ATCC VR-885 / DSM 19411 / UW-3/Cx).